Here is a 285-residue protein sequence, read N- to C-terminus: 4-hydroxybenzoate octaprenyltransferase (285 aa).

The next 7 helical transmembrane spans lie at 20–39 (GSYLLLWPTLWALMIAAQGL), 92–112 (ALGLFATLVGVAFLLVLALNW), 137–157 (FPQVVLGAAFGWAIPMAFMAV), 159–179 (EAVPAIAWWLFAINVLWTVAY), 206–226 (YDRLIIGLLQLSVVVMLLGMG), 228–248 (YLGFTLSFYVGVLLASVLFIH), and 260–280 (ACFSAFLNNNYVGMAIALGIA).

It belongs to the UbiA prenyltransferase family. The cofactor is Mg(2+).

It localises to the cell inner membrane. It catalyses the reaction all-trans-octaprenyl diphosphate + 4-hydroxybenzoate = 4-hydroxy-3-(all-trans-octaprenyl)benzoate + diphosphate. Its pathway is cofactor biosynthesis; ubiquinone biosynthesis. Functionally, catalyzes the prenylation of para-hydroxybenzoate (PHB) with an all-trans polyprenyl group. Mediates the second step in the final reaction sequence of ubiquinone-8 (UQ-8) biosynthesis, which is the condensation of the polyisoprenoid side chain with PHB, generating the first membrane-bound Q intermediate 3-octaprenyl-4-hydroxybenzoate. The chain is 4-hydroxybenzoate octaprenyltransferase from Pseudoalteromonas atlantica (strain T6c / ATCC BAA-1087).